We begin with the raw amino-acid sequence, 502 residues long: ATP synthase subunit alpha (502 aa).

169 to 176 (GDRQTGKT) lines the ATP pocket.

This sequence belongs to the ATPase alpha/beta chains family. As to quaternary structure, F-type ATPases have 2 components, CF(1) - the catalytic core - and CF(0) - the membrane proton channel. CF(1) has five subunits: alpha(3), beta(3), gamma(1), delta(1), epsilon(1). CF(0) has three main subunits: a(1), b(2) and c(9-12). The alpha and beta chains form an alternating ring which encloses part of the gamma chain. CF(1) is attached to CF(0) by a central stalk formed by the gamma and epsilon chains, while a peripheral stalk is formed by the delta and b chains.

The protein resides in the cell inner membrane. It catalyses the reaction ATP + H2O + 4 H(+)(in) = ADP + phosphate + 5 H(+)(out). Its function is as follows. Produces ATP from ADP in the presence of a proton gradient across the membrane. The alpha chain is a regulatory subunit. The sequence is that of ATP synthase subunit alpha from Solidesulfovibrio magneticus (strain ATCC 700980 / DSM 13731 / RS-1) (Desulfovibrio magneticus).